The chain runs to 285 residues: Phospholipid phosphatase 1 (285 aa).

Topologically, residues 1 to 6 are cytoplasmic; sequence MFDKTR. The PDZ-binding; involved in localization to the apical cell membrane motif lies at 5–7; the sequence is TRL. Residues 7-27 form a helical membrane-spanning segment; that stretch reads LPYVALDVLCVLLAGLPFAIL. The Extracellular portion of the chain corresponds to 28-53; that stretch reads TSRHTPFQRGLFCNDESIKYPYKEDT. Residues 54 to 74 traverse the membrane as a helical segment; sequence IPYPLLGGIIIPFSIIVMIVG. Over 75–94 the chain is Cytoplasmic; that stretch reads ETLSVYFNLLHSNSFIRNNY. The chain crosses the membrane as a helical span at residues 95 to 115; it reads IATIYKAIGTFLFGAAASQSL. Residues 116–164 are Extracellular-facing; the sequence is TDIAKYSIGRLRPHFLDVCDPDWSKINCSDGYIENYICRGNAQKVKEGR. A phosphatase sequence motif I region spans residues 120–128; sequence KYSIGRLRP. N-linked (GlcNAc...) asparagine glycosylation occurs at Asn-142. A helical transmembrane segment spans residues 165–185; the sequence is LSFYSGHSSFSMYCMLFVALY. Residues 168–171 form a phosphatase sequence motif II region; the sequence is YSGH. Residue His-171 is the Proton donors of the active site. Over 186-196 the chain is Cytoplasmic; sequence LQARMKGDWAR. The helical transmembrane segment at 197–216 threads the bilayer; it reads LLRPTLQFGLVAVSIYVGLS. The tract at residues 216-227 is phosphatase sequence motif III; it reads SRVSDYKHHWSD. The Extracellular segment spans residues 217–229; it reads RVSDYKHHWSDVL. His-223 (nucleophile) is an active-site residue. Residues 230–250 form a helical membrane-spanning segment; the sequence is TGLIQGALVAIVVAVYVSDFF. Residues 251–285 are Cytoplasmic-facing; the sequence is KERNSPFKERKEEDSHTTLHETPTTGNHYRNSHQP. The span at 257 to 269 shows a compositional bias: basic and acidic residues; it reads FKERKEEDSHTTL. Positions 257–285 are disordered; it reads FKERKEEDSHTTLHETPTTGNHYRNSHQP. Over residues 270–285 the composition is skewed to polar residues; that stretch reads HETPTTGNHYRNSHQP.

The protein belongs to the PA-phosphatase related phosphoesterase family. In terms of assembly, forms functional homodimers and homooligomers that are not required for substrate recognition and catalytic activity. Can also form heterooligomers with PLPP2 and PLPP3. Post-translationally, N-glycosylated. N-linked sugars are of the complex type. N-glycosylation is not required for the phosphatase activity.

The protein resides in the cell membrane. Its subcellular location is the apical cell membrane. It is found in the membrane raft. It localises to the membrane. The protein localises to the caveola. It catalyses the reaction a 1,2-diacyl-sn-glycero-3-phosphate + H2O = a 1,2-diacyl-sn-glycerol + phosphate. It carries out the reaction 1,2-dihexadecanoyl-sn-glycero-3-phosphate + H2O = 1,2-dihexadecanoyl-sn-glycerol + phosphate. The enzyme catalyses 1,2-di-(9Z-octadecenoyl)-sn-glycero-3-phosphate + H2O = 1,2-di-(9Z-octadecenoyl)-sn-glycerol + phosphate. The catalysed reaction is a monoacyl-sn-glycero-3-phosphate + H2O = a monoacylglycerol + phosphate. It catalyses the reaction (9Z)-octadecenoyl-sn-glycero-3-phosphate + H2O = (9Z-octadecenoyl)-glycerol + phosphate. It carries out the reaction a 1-acyl-sn-glycero-3-phosphate + H2O = a 1-acyl-sn-glycerol + phosphate. The enzyme catalyses 1-(9Z-octadecenoyl)-sn-glycero-3-phosphate + H2O = 1-(9Z-octadecenoyl)-sn-glycerol + phosphate. The catalysed reaction is a 1,2-diacyl-sn-glycerol 3-diphosphate + H2O = a 1,2-diacyl-sn-glycero-3-phosphate + phosphate + H(+). It catalyses the reaction sphing-4-enine 1-phosphate + H2O = sphing-4-enine + phosphate. It carries out the reaction an N-acylsphing-4-enine 1-phosphate + H2O = an N-acylsphing-4-enine + phosphate. The enzyme catalyses N-(octanoyl)-sphing-4-enine-1-phosphate + H2O = N-octanoylsphing-4-enine + phosphate. The catalysed reaction is N-(9Z-octadecenoyl)-ethanolamine phosphate + H2O = N-(9Z-octadecenoyl) ethanolamine + phosphate. It catalyses the reaction 1-hexadecanoyl-2-(9Z-octadecenoyl)-sn-glycero-3-phosphate + H2O = 1-hexadecanoyl-2-(9Z-octadecenoyl)-sn-glycerol + phosphate. It participates in lipid metabolism; phospholipid metabolism. With respect to regulation, magnesium-independent phospholipid phosphatase. Insensitive to N-ethylmaleimide. Magnesium-independent phospholipid phosphatase of the plasma membrane that catalyzes the dephosphorylation of a variety of glycerolipid and sphingolipid phosphate esters including phosphatidate/PA, lysophosphatidate/LPA, diacylglycerol pyrophosphate/DGPP, sphingosine 1-phosphate/S1P and ceramide 1-phosphate/C1P. Also acts on N-oleoyl ethanolamine phosphate/N-(9Z-octadecenoyl)-ethanolamine phosphate, a potential physiological compound. Through its extracellular phosphatase activity allows both the hydrolysis and the cellular uptake of these bioactive lipid mediators from the milieu, regulating signal transduction in different cellular processes. It is for instance essential for the extracellular hydrolysis of S1P and subsequent conversion into intracellular S1P. Involved in the regulation of inflammation, platelets activation, cell proliferation and migration among other processes. May also have an intracellular activity to regulate phospholipid-mediated signaling pathways. In Sus scrofa (Pig), this protein is Phospholipid phosphatase 1.